Reading from the N-terminus, the 943-residue chain is Serine/threonine-protein kinase ATG1 (943 aa).

Residues 22–327 (FVIDKEIGKG…FEDFFHHPVI (306 aa)) enclose the Protein kinase domain. Residues 28–36 (IGKGSFAQV) and Lys-51 each bind ATP. Asp-165 acts as the Proton acceptor in catalysis. Disordered stretches follow at residues 334–468 (LVED…LTDE), 503–561 (QQGQ…SPGA), 774–800 (LPEE…GGQA), 858–888 (HLPK…SDDK), and 914–943 (AASK…SVPT). The span at 338–352 (DIPKPEKPVLAETKS) shows a compositional bias: basic and acidic residues. A compositionally biased stretch (polar residues) spans 517 to 529 (ATQQGHPTSTTGA). Over residues 542 to 554 (RNDHYRKASHDKT) the composition is skewed to basic and acidic residues. Residues 919–928 (QQQQQQQQVV) are compositionally biased toward low complexity.

It belongs to the protein kinase superfamily. Ser/Thr protein kinase family. APG1/unc-51/ULK1 subfamily. As to quaternary structure, homodimer. Forms a ternary complex with ATG13 and ATG17.

It localises to the cytoplasm. Its subcellular location is the preautophagosomal structure membrane. It carries out the reaction L-seryl-[protein] + ATP = O-phospho-L-seryl-[protein] + ADP + H(+). It catalyses the reaction L-threonyl-[protein] + ATP = O-phospho-L-threonyl-[protein] + ADP + H(+). Its function is as follows. Serine/threonine protein kinase involved in the cytoplasm to vacuole transport (Cvt) and found to be essential in autophagy, where it is required for the formation of autophagosomes. Involved in the clearance of protein aggregates which cannot be efficiently cleared by the proteasome. Required for selective autophagic degradation of the nucleus (nucleophagy) as well as for mitophagy which contributes to regulate mitochondrial quantity and quality by eliminating the mitochondria to a basal level to fulfill cellular energy requirements and preventing excess ROS production. Also involved in endoplasmic reticulum-specific autophagic process, in selective removal of ER-associated degradation (ERAD) substrates. Plays a key role in ATG9 and ATG23 cycling through the pre-autophagosomal structure and is necessary to promote ATG18 binding to ATG9 through phosphorylation of ATG9. Catalyzes phosphorylation of ATG4, decreasing the interaction between ATG4 and ATG8 and impairing deconjugation of PE-conjugated forms of ATG8. The sequence is that of Serine/threonine-protein kinase ATG1 from Chaetomium globosum (strain ATCC 6205 / CBS 148.51 / DSM 1962 / NBRC 6347 / NRRL 1970) (Soil fungus).